The following is a 342-amino-acid chain: Deoxyhypusine synthase regulatory subunit (342 aa).

Residues 72–76, 98–100, glutamate 104, aspartate 213, 282–283, and 316–317 each bind NAD(+); these read SNLIS, TAG, TG, and DA.

Belongs to the deoxyhypusine synthase family. As to quaternary structure, heterotetramer formed by a homodimer of the non-catalytic regulatory subunit DHSp and a homodimer of the catalytic subunit DHSc where DHSc appears to bind spermidine and DHSp appears to bind NAD(+).

It functions in the pathway protein modification; eIF5A hypusination. Required for the activation and stability of deoxyhypusine synthase DHSc. Required for cell growth and survival. The polypeptide is Deoxyhypusine synthase regulatory subunit (Trypanosoma brucei brucei (strain 927/4 GUTat10.1)).